The following is a 91-amino-acid chain: Protein transport protein sft1 (91 aa).

The Cytoplasmic portion of the chain corresponds to 1 to 68; it reads MNDQNERRLE…RVVRSAGRRR (68 aa). The chain crosses the membrane as a helical; Anchor for type IV membrane protein span at residues 69–86; that stretch reads IMTMVLAIVGSILIIYYA. Residues 87-91 lie on the Lumenal side of the membrane; the sequence is SKWFF.

In terms of assembly, component of a SNARE complex consisting of sed5, gos1, ykt6 and sft1.

Its subcellular location is the golgi apparatus membrane. Its function is as follows. Vesicle SNARE required for retrograde transport within the Golgi complex. The polypeptide is Protein transport protein sft1 (sft1) (Schizosaccharomyces pombe (strain 972 / ATCC 24843) (Fission yeast)).